The following is a 454-amino-acid chain: Bifunctional protein GlmU (454 aa).

The tract at residues Met1 to Arg226 is pyrophosphorylase. Residues Leu8–Gly11, Lys22, Gln73, Gly78–Thr79, Tyr100–Asp102, Gly137, Glu151, Asn166, and Asn224 contribute to the UDP-N-acetyl-alpha-D-glucosamine site. Asp102 contributes to the Mg(2+) binding site. Position 224 (Asn224) interacts with Mg(2+). Residues Val227 to Ala247 form a linker region. The segment at Gly248–Lys454 is N-acetyltransferase. Residues Arg330 and Lys348 each contribute to the UDP-N-acetyl-alpha-D-glucosamine site. The active-site Proton acceptor is His360. The UDP-N-acetyl-alpha-D-glucosamine site is built by Tyr363 and Asn374. Acetyl-CoA is bound by residues Ala377, Asn383–Tyr384, Ser402, Ala420, and Arg437.

In the N-terminal section; belongs to the N-acetylglucosamine-1-phosphate uridyltransferase family. It in the C-terminal section; belongs to the transferase hexapeptide repeat family. Homotrimer. Mg(2+) is required as a cofactor.

It is found in the cytoplasm. The catalysed reaction is alpha-D-glucosamine 1-phosphate + acetyl-CoA = N-acetyl-alpha-D-glucosamine 1-phosphate + CoA + H(+). It catalyses the reaction N-acetyl-alpha-D-glucosamine 1-phosphate + UTP + H(+) = UDP-N-acetyl-alpha-D-glucosamine + diphosphate. Its pathway is nucleotide-sugar biosynthesis; UDP-N-acetyl-alpha-D-glucosamine biosynthesis; N-acetyl-alpha-D-glucosamine 1-phosphate from alpha-D-glucosamine 6-phosphate (route II): step 2/2. It functions in the pathway nucleotide-sugar biosynthesis; UDP-N-acetyl-alpha-D-glucosamine biosynthesis; UDP-N-acetyl-alpha-D-glucosamine from N-acetyl-alpha-D-glucosamine 1-phosphate: step 1/1. It participates in bacterial outer membrane biogenesis; LPS lipid A biosynthesis. Catalyzes the last two sequential reactions in the de novo biosynthetic pathway for UDP-N-acetylglucosamine (UDP-GlcNAc). The C-terminal domain catalyzes the transfer of acetyl group from acetyl coenzyme A to glucosamine-1-phosphate (GlcN-1-P) to produce N-acetylglucosamine-1-phosphate (GlcNAc-1-P), which is converted into UDP-GlcNAc by the transfer of uridine 5-monophosphate (from uridine 5-triphosphate), a reaction catalyzed by the N-terminal domain. This Shewanella sp. (strain MR-4) protein is Bifunctional protein GlmU.